Consider the following 359-residue polypeptide: 3-dehydroquinate synthase (359 aa).

NAD(+)-binding positions include Asp-71–Lys-76, Gly-105–Asp-109, Thr-129–Thr-130, Lys-142, and Lys-151. Zn(2+) is bound by residues Glu-184, His-247, and His-264.

The protein belongs to the sugar phosphate cyclases superfamily. Dehydroquinate synthase family. Co(2+) serves as cofactor. It depends on Zn(2+) as a cofactor. The cofactor is NAD(+).

Its subcellular location is the cytoplasm. The enzyme catalyses 7-phospho-2-dehydro-3-deoxy-D-arabino-heptonate = 3-dehydroquinate + phosphate. It functions in the pathway metabolic intermediate biosynthesis; chorismate biosynthesis; chorismate from D-erythrose 4-phosphate and phosphoenolpyruvate: step 2/7. Its function is as follows. Catalyzes the conversion of 3-deoxy-D-arabino-heptulosonate 7-phosphate (DAHP) to dehydroquinate (DHQ). The protein is 3-dehydroquinate synthase of Burkholderia lata (strain ATCC 17760 / DSM 23089 / LMG 22485 / NCIMB 9086 / R18194 / 383).